The sequence spans 359 residues: MDSLALAPQVYSRKDKSLGVLVANFLTLYNRPDVDLFGLDDAAAKLGVERRRIYDVVNILESIGLVARSGKNQYSWKGFGAVPRALSELKEEGMKEKFAIVPFVAKSEMVVYEKEGEESFMLSPDDQEFSPSPRPDNRKERTLWLLAQNFVKLFLCSDDDLVTFDSATKALLNESQDMNMRKKVRRLYDIANVFSSMKLIEKTHVPETKKPAYRWLGSKTIFENRFIDGSASLCDRNVPKKRAFGTELTNVNAKRNKSGCSKEDSKRNGNQNTSIVIKQEQCDDVKPDVKNFASGSSTPAGTSESNDMGNNIRPRGRLGVIEALSTLYQPSYCNPELLGLFAHYNETFRSYQEEFGREK.

DNA-binding regions lie at residues 13–78 and 138–217; these read RKDK…SWKG and RKER…RWLG. Disordered stretches follow at residues 255 to 274 and 288 to 313; these read RNKS…QNTS and DVKN…NNIR. Residues 293 to 309 are compositionally biased toward polar residues; sequence ASGSSTPAGTSESNDMG.

Belongs to the E2F/DP family. In terms of assembly, monomer. No interactions with DPA or E2FA. As to expression, preferentially expressed in proliferating tissues. Highly expressed in young stalk and young flowers. Lower expression in young leaves and mature flowers. Detected in cotyledonary vascular tissues, the shoot apical meristem, the base of trichomes, the fully developed stomata, the central root cylinder and in the columella of lateral roots but not in the primary root tips or in the leaf epidermal cells.

It is found in the nucleus. Inhibitor of E2F-dependent regulation of gene expression. Binds specifically the E2 recognition site as a monomer without interacting with DP proteins. May be up-regulating E2FA and down-regulating repressors of cell cycle progression. Promotes cell proliferation and represses cell elongation. Regulated by proteolysis via a ubiquitin-proteasome pathway. This is E2F transcription factor-like E2FD (E2FD) from Arabidopsis thaliana (Mouse-ear cress).